A 211-amino-acid chain; its full sequence is Protein N-terminal glutamine amidohydrolase (211 aa).

Catalysis depends on residues Cys-24, His-78, and Asp-94.

It belongs to the NTAQ1 family. As to quaternary structure, monomer.

It catalyses the reaction N-terminal L-glutaminyl-[protein] + H2O = N-terminal L-glutamyl-[protein] + NH4(+). Functionally, mediates the side-chain deamidation of N-terminal glutamine residues to glutamate, an important step in N-end rule pathway of protein degradation. Conversion of the resulting N-terminal glutamine to glutamate renders the protein susceptible to arginylation, polyubiquitination and degradation as specified by the N-end rule. Does not act on substrates with internal or C-terminal glutamine and does not act on non-glutamine residues in any position. The chain is Protein N-terminal glutamine amidohydrolase (tun) from Anopheles gambiae (African malaria mosquito).